A 441-amino-acid chain; its full sequence is MPYFDNISTIAYEGPASKNPLAFKFYNPEEKVGDKTMEEHLRFSVAYWHTFTGDGSDPFGAGNMIRPWNKYSGMDLAKARVEAAFEFFEKLNIPFFCFHDVDIAPEGETLKETYKNLDIIVDMIEEYMKTSKTKLLWNTANLFTHPRFVHGAATSCNADVFAYAAAKVKKGLEIAKRLGAENYVFWGGREGYETLLNTDMKLELDNLARFLHMAVDYAKEIGFDGQFLIEPKPKEPTKHQYDFDVATALAFLQTYGLKDYFKFNIEANHATLAGHTFEHELRVARIHGMLGSVDANQGDMLLGWDTDEFPTDLYSTTLAMYEILKNGGLGRGGLNFDAKVRRGSFEPEDLFYAHIAGMDSFAVGLKVAHRLIEDRVFDEFIEERYKSYTEGIGREIVEGTADFHKLEAHALQLGEIQNQSGRQERLKTLLNQYLLEVCAAR.

Catalysis depends on residues His-99 and Asp-102. 6 residues coordinate Mn(2+): Glu-230, Glu-266, Asp-294, Asp-305, Asp-307, and Asp-337.

It belongs to the xylose isomerase family. Homotetramer. It depends on Mn(2+) as a cofactor.

It localises to the cytoplasm. It catalyses the reaction alpha-D-xylose = alpha-D-xylulofuranose. This is Xylose isomerase (xylA) from Geobacillus stearothermophilus (Bacillus stearothermophilus).